Here is an 85-residue protein sequence, read N- to C-terminus: Small ribosomal subunit protein uS17 (85 aa).

It belongs to the universal ribosomal protein uS17 family. As to quaternary structure, part of the 30S ribosomal subunit.

Functionally, one of the primary rRNA binding proteins, it binds specifically to the 5'-end of 16S ribosomal RNA. The polypeptide is Small ribosomal subunit protein uS17 (Mycoplasma capricolum subsp. capricolum (strain California kid / ATCC 27343 / NCTC 10154)).